We begin with the raw amino-acid sequence, 79 residues long: Tungsten-containing formylmethanofuran dehydrogenase 2 subunit G (79 aa).

4Fe-4S ferredoxin-type domains follow at residues 2-31 and 51-79; these read VKIVIHEERCHGCGNCVIACPVNACNSPNV and TVSVINEDLCEACMTCELACPVDAIEIKT. The [4Fe-4S] cluster site is built by C11, C14, C17, C21, C60, C63, C66, and C70.

[4Fe-4S] cluster is required as a cofactor.

The enzyme catalyses N-formylmethanofuran + 2 oxidized [2Fe-2S]-[ferredoxin] + H2O = methanofuran + 2 reduced [2Fe-2S]-[ferredoxin] + CO2 + H(+). The protein operates within one-carbon metabolism; methanogenesis from CO(2); 5,10-methenyl-5,6,7,8-tetrahydromethanopterin from CO(2): step 1/3. With respect to regulation, not inactivated by cyanide. In terms of biological role, catalyzes the reversible oxidation of CO(2) and methanofuran (MFR) to N-formylmethanofuran (CHO-MFR). This enzyme is oxygen-labile. May function as an electron transfer protein. In Methanopyrus kandleri (strain AV19 / DSM 6324 / JCM 9639 / NBRC 100938), this protein is Tungsten-containing formylmethanofuran dehydrogenase 2 subunit G (fwdG).